The following is a 686-amino-acid chain: Proprotein convertase subtilisin/kexin type 9 (686 aa).

Residues 1–28 (MGTVSSRRLWWPLPLLLLLLLGPAGTRA) form the signal peptide. The propeptide occupies 29–150 (QEDDDDDYEE…IEEDSSVFAQ (122 aa)). Tyrosine 36 carries the post-translational modification Sulfotyrosine. Serine 45 bears the Phosphoserine mark. Residues 75 to 147 (TYVVVLKEET…VDYIEEDSSV (73 aa)) form the Inhibitor I9 domain. The region spanning 153 to 459 (PWNLERITPA…GWQLFCRTVW (307 aa)) is the Peptidase S8 domain. Active-site charge relay system residues include aspartate 184 and histidine 224. 2 disulfides stabilise this stretch: cysteine 221–cysteine 253 and cysteine 321–cysteine 356. Serine 384 (charge relay system) is an active-site residue. Residues 448 to 686 (GEGWQLFCRT…CRSQHLAQAS (239 aa)) form a C-terminal domain region. 3 cysteine pairs are disulfide-bonded: cysteine 455–cysteine 525, cysteine 475–cysteine 524, and cysteine 484–cysteine 507. A glycan (N-linked (GlcNAc...) asparagine) is linked at asparagine 531. 6 disulfide bridges follow: cysteine 532–cysteine 599, cysteine 550–cysteine 598, cysteine 560–cysteine 586, cysteine 606–cysteine 677, cysteine 624–cysteine 676, and cysteine 633–cysteine 652. Serine 686 carries the post-translational modification Phosphoserine.

The protein belongs to the peptidase S8 family. As to quaternary structure, monomer. Can self-associate to form dimers and higher multimers which may have increased LDLR degrading activity. The precursor protein but not the mature protein may form multimers. Interacts with APOB, VLDLR, LRP8/APOER2 and BACE1. The full-length immature form (pro-PCSK9) interacts with SCNN1A, SCNN1B and SCNN1G. The pro-PCSK9 form (via C-terminal domain) interacts with LDLR. Interacts (via the C-terminal domain) with ANXA2 (via repeat Annexin 1); the interaction inhibits the degradation of LDLR. The cofactor is Ca(2+). Cleavage by furin and PCSK5 generates a truncated inactive protein that is unable to induce LDLR degradation. Post-translationally, undergoes autocatalytic cleavage in the endoplasmic reticulum to release the propeptide from the N-terminus and the cleavage of the propeptide is strictly required for its maturation and activation. The cleaved propeptide however remains associated with the catalytic domain through non-covalent interactions, preventing potential substrates from accessing its active site. As a result, it is secreted from cells as a propeptide-containing, enzymatically inactive protein. In terms of processing, phosphorylation protects the propeptide against proteolysis.

It is found in the cytoplasm. Its subcellular location is the secreted. The protein localises to the endosome. The protein resides in the lysosome. It localises to the cell surface. It is found in the endoplasmic reticulum. Its subcellular location is the golgi apparatus. Its proteolytic activity is autoinhibited by the non-covalent binding of the propeptide to the catalytic domain. Inhibited by EGTA. Functionally, crucial player in the regulation of plasma cholesterol homeostasis. Binds to low-density lipid receptor family members: low density lipoprotein receptor (LDLR), very low density lipoprotein receptor (VLDLR), apolipoprotein E receptor (LRP1/APOER) and apolipoprotein receptor 2 (LRP8/APOER2), and promotes their degradation in intracellular acidic compartments. Acts via a non-proteolytic mechanism to enhance the degradation of the hepatic LDLR through a clathrin LDLRAP1/ARH-mediated pathway. May prevent the recycling of LDLR from endosomes to the cell surface or direct it to lysosomes for degradation. Can induce ubiquitination of LDLR leading to its subsequent degradation. Inhibits intracellular degradation of APOB via the autophagosome/lysosome pathway in a LDLR-independent manner. Involved in the disposal of non-acetylated intermediates of BACE1 in the early secretory pathway. Inhibits epithelial Na(+) channel (ENaC)-mediated Na(+) absorption by reducing ENaC surface expression primarily by increasing its proteasomal degradation. Regulates neuronal apoptosis via modulation of LRP8/APOER2 levels and related anti-apoptotic signaling pathways. In Saguinus labiatus (Red-chested mustached tamarin), this protein is Proprotein convertase subtilisin/kexin type 9 (PCSK9).